A 391-amino-acid polypeptide reads, in one-letter code: 1-acyl-sn-glycerol-3-phosphate acyltransferase 2 (391 aa).

The chain crosses the membrane as a helical span at residues M3–V23. The HXXXXD motif motif lies at H92–D97. 2 helical membrane-spanning segments follow: residues L306–W326 and K334–I354. The tract at residues Q358–K391 is disordered.

The protein belongs to the 1-acyl-sn-glycerol-3-phosphate acyltransferase family.

Its subcellular location is the endoplasmic reticulum membrane. It catalyses the reaction a 1-acyl-sn-glycero-3-phosphate + an acyl-CoA = a 1,2-diacyl-sn-glycero-3-phosphate + CoA. Its pathway is phospholipid metabolism; CDP-diacylglycerol biosynthesis; CDP-diacylglycerol from sn-glycerol 3-phosphate: step 2/3. Functionally, converts lysophosphatidic acid (LPA) into phosphatidic acid by incorporating acyl moiety at the 2 position. This is 1-acyl-sn-glycerol-3-phosphate acyltransferase 2 (LPAT2) from Brassica oleracea (Wild cabbage).